Consider the following 143-residue polypeptide: Large ribosomal subunit protein uL13 (143 aa).

Belongs to the universal ribosomal protein uL13 family. Part of the 50S ribosomal subunit.

Its function is as follows. This protein is one of the early assembly proteins of the 50S ribosomal subunit, although it is not seen to bind rRNA by itself. It is important during the early stages of 50S assembly. This chain is Large ribosomal subunit protein uL13, found in Neisseria meningitidis serogroup C (strain 053442).